Reading from the N-terminus, the 31-residue chain is Cytochrome b6-f complex subunit 6 (31 aa).

Residues Ile4–Gly24 traverse the membrane as a helical segment.

Belongs to the PetL family. The 4 large subunits of the cytochrome b6-f complex are cytochrome b6, subunit IV (17 kDa polypeptide, PetD), cytochrome f and the Rieske protein, while the 4 small subunits are PetG, PetL, PetM and PetN. The complex functions as a dimer.

It is found in the plastid. It localises to the chloroplast thylakoid membrane. Its function is as follows. Component of the cytochrome b6-f complex, which mediates electron transfer between photosystem II (PSII) and photosystem I (PSI), cyclic electron flow around PSI, and state transitions. PetL is important for photoautotrophic growth as well as for electron transfer efficiency and stability of the cytochrome b6-f complex. This chain is Cytochrome b6-f complex subunit 6, found in Saccharum barberi (Indian sugarcane).